A 254-amino-acid chain; its full sequence is Ubiquinone biosynthesis O-methyltransferase (254 aa).

Arg47, Gly78, Asp99, and Met141 together coordinate S-adenosyl-L-methionine.

This sequence belongs to the methyltransferase superfamily. UbiG/COQ3 family.

It carries out the reaction a 3-demethylubiquinol + S-adenosyl-L-methionine = a ubiquinol + S-adenosyl-L-homocysteine + H(+). The enzyme catalyses a 3-(all-trans-polyprenyl)benzene-1,2-diol + S-adenosyl-L-methionine = a 2-methoxy-6-(all-trans-polyprenyl)phenol + S-adenosyl-L-homocysteine + H(+). Its pathway is cofactor biosynthesis; ubiquinone biosynthesis. Its function is as follows. O-methyltransferase that catalyzes the 2 O-methylation steps in the ubiquinone biosynthetic pathway. The protein is Ubiquinone biosynthesis O-methyltransferase of Rhodopseudomonas palustris (strain BisB18).